The sequence spans 453 residues: Choline kinase alpha (453 aa).

Residues 22 to 81 (CGGSAAPTPGVGQQRDAAGELESKQLGGRSQPLALPPPPPPPLPLPPPPSPPLADEQPEP) are disordered. Pro residues predominate over residues 55–73 (ALPPPPPPPLPLPPPPSPP). Serine 71 is modified (phosphoserine). ATP is bound by residues 113–119 (RGGLSNM), arginine 142, and 203–209 (QFIPSRR). Phosphocholine is bound at residue 115–117 (GLS). Residue lysine 243 is modified to N6-acetyllysine. Residue serine 275 is modified to Phosphoserine. Positions 304 and 326 each coordinate ATP.

Belongs to the choline/ethanolamine kinase family. As to quaternary structure, heterodimer with CHKB. Homodimer. In terms of assembly, monomer; acetylation by KAT5 promotes dissociation of the homodimer and monomerization. Phosphorylated at Ser-275 by AMPK in response to glucose deprivation, leading to localization to lipid droplets. In terms of processing, acetylated by KAT5 at Lys-243 following phosphorylation by AMPK, leading to monomerization and conversion into a tyrosine-protein kinase. In terms of tissue distribution, testis, brain, lung, kidney and liver.

It is found in the cytoplasm. The protein resides in the cytosol. Its subcellular location is the lipid droplet. It carries out the reaction choline + ATP = phosphocholine + ADP + H(+). It catalyses the reaction ethanolamine + ATP = phosphoethanolamine + ADP + H(+). The enzyme catalyses L-tyrosyl-[protein] + ATP = O-phospho-L-tyrosyl-[protein] + ADP + H(+). The protein operates within phospholipid metabolism; phosphatidylcholine biosynthesis; phosphocholine from choline: step 1/1. It participates in phospholipid metabolism; phosphatidylethanolamine biosynthesis; phosphatidylethanolamine from ethanolamine: step 1/3. In terms of biological role, plays a key role in phospholipid biosynthesis by catalyzing the phosphorylation of free choline to phosphocholine, the first step in phosphatidylcholine biosynthesis. Also phosphorylates ethanolamine, thereby contributing to phosphatidylethanolamine biosynthesis. Has higher activity with choline. Its function is as follows. This isoform plays a key role in lipolysis of lipid droplets following glucose deprivation. In response to glucose deprivation, phosphorylated by AMPK, promoting localization to lipid droplets. Phosphorylation is followed by acetylation by KAT5, leading to dissociation of the homodimer into a monomer. Monomeric CHKA isoform 1 is converted into a tyrosine-protein kinase, which phosphorylates lipid droplet structural proteins PLIN2 and PLIN3, leading to lipolysis of lipid droplets. The sequence is that of Choline kinase alpha (Chka) from Rattus norvegicus (Rat).